The chain runs to 71 residues: Small ribosomal subunit protein bS18 (71 aa).

It belongs to the bacterial ribosomal protein bS18 family. As to quaternary structure, part of the 30S ribosomal subunit. Forms a tight heterodimer with protein bS6.

Its function is as follows. Binds as a heterodimer with protein bS6 to the central domain of the 16S rRNA, where it helps stabilize the platform of the 30S subunit. The protein is Small ribosomal subunit protein bS18 of Synechocystis sp. (strain ATCC 27184 / PCC 6803 / Kazusa).